Here is a 624-residue protein sequence, read N- to C-terminus: (-)-beta-phellandrene synthase 4, chloroplastic (624 aa).

The N-terminal 48 residues, 1-48 (MAIVSSVPLASKSCLHKSLISSIHKLKPFCRTIPTLGMSRPGKSVMPS), are a transit peptide targeting the chloroplast. The disordered stretch occupies residues 41-60 (PGKSVMPSMSMSSPVSDDGV). The span at 44-56 (SVMPSMSMSSPVS) shows a compositional bias: low complexity. Residues D375, D379, and D527 each contribute to the Mg(2+) site. Residues 375–379 (DDMYD) carry the DDXXD motif motif.

It belongs to the terpene synthase family. Tpsd subfamily. It depends on Mg(2+) as a cofactor. Mn(2+) serves as cofactor.

The protein resides in the plastid. It localises to the chloroplast. The enzyme catalyses (2E)-geranyl diphosphate = (-)-beta-phellandrene + diphosphate. It participates in terpene metabolism; oleoresin biosynthesis. In terms of biological role, terpene synthase (TPS) involved in the biosynthesis of monoterpene natural products included in conifer oleoresin secretions and volatile emissions; these compounds contribute to biotic and abiotic stress defense against herbivores and pathogens. Catalyzes the conversion of (2E)-geranyl diphosphate (GPP) to (-)-beta-phellandrene. The protein is (-)-beta-phellandrene synthase 4, chloroplastic of Picea sitchensis (Sitka spruce).